Consider the following 178-residue polypeptide: Stathmin-2-B (178 aa).

The 141-residue stretch at 38–178 (DDMEVKQLNK…KNKEQLELSG (141 aa)) folds into the SLD domain. Residues 75 to 178 (KRKDVSLEEI…KNKEQLELSG (104 aa)) adopt a coiled-coil conformation.

The protein belongs to the stathmin family. As to expression, nervous tissue.

It localises to the cytoplasm. The protein localises to the membrane. The protein resides in the cell projection. Its subcellular location is the lamellipodium. The protein is Stathmin-2-B (stmn2-b) of Xenopus laevis (African clawed frog).